We begin with the raw amino-acid sequence, 465 residues long: tRNA-2-methylthio-N(6)-dimethylallyladenosine synthase (465 aa).

Residues 26-141 form the MTTase N-terminal domain; it reads MRAHIITYGC…LPEALKANER (116 aa). [4Fe-4S] cluster is bound by residues Cys35, Cys71, Cys104, Cys173, Cys177, and Cys180. The Radical SAM core domain maps to 159-388; the sequence is PKGALSAHVT…IEKQKEWSYR (230 aa). A TRAM domain is found at 391 to 453; it reads LEWVGKTVEV…PHLLFGEVVG (63 aa).

It belongs to the methylthiotransferase family. MiaB subfamily. Monomer. The cofactor is [4Fe-4S] cluster.

The protein localises to the cytoplasm. It catalyses the reaction N(6)-dimethylallyladenosine(37) in tRNA + (sulfur carrier)-SH + AH2 + 2 S-adenosyl-L-methionine = 2-methylsulfanyl-N(6)-dimethylallyladenosine(37) in tRNA + (sulfur carrier)-H + 5'-deoxyadenosine + L-methionine + A + S-adenosyl-L-homocysteine + 2 H(+). Its function is as follows. Catalyzes the methylthiolation of N6-(dimethylallyl)adenosine (i(6)A), leading to the formation of 2-methylthio-N6-(dimethylallyl)adenosine (ms(2)i(6)A) at position 37 in tRNAs that read codons beginning with uridine. The polypeptide is tRNA-2-methylthio-N(6)-dimethylallyladenosine synthase (Thermus thermophilus (strain ATCC 27634 / DSM 579 / HB8)).